The sequence spans 620 residues: E3 ubiquitin-protein ligase AMFR (620 aa).

7 helical membrane-spanning segments follow: residues 75-95, 115-135, 138-158, 179-199, 201-221, 247-267, and 269-289; these read LFVW…GKVI, FWNF…VQRV, VVLW…VQLC, VLAL…LCAL, GHIH…LVTV, SSYI…LDLM, and HIHM…VIFM. The segment at 334 to 372 adopts an RING-type; atypical zinc-finger fold; that stretch reads CAICWDSMTTARKLPCGHLFHNSCLRSWLEQDTSCPTCR. One can recognise a CUE domain in the interval 449-491; the sequence is QLNGMAHQIQEMFPQVPYHLILQDLQLTRSVEVTTDNILEGRI. Low complexity predominate over residues 510-526; it reads ASEDGAGASSGSEVAAP. Disordered regions lie at residues 510-544 and 569-598; these read ASED…SADE and PEDG…DSVT. Positions 531–544 are enriched in basic and acidic residues; the sequence is FEVRGSRFSKSADE. A compositionally biased stretch (acidic residues) spans 581–595; the sequence is DNDDSVPSIEDEDSD.

As to expression, widely expressed.

It localises to the endoplasmic reticulum membrane. It carries out the reaction [E2 ubiquitin-conjugating enzyme]-S-ubiquitinyl-L-cysteine + [acceptor protein]-L-cysteine = [E2 ubiquitin-conjugating enzyme]-L-cysteine + [acceptor protein]-S-ubiquitinyl-L-cysteine.. It participates in protein modification; protein ubiquitination. In terms of biological role, E3 ubiquitin-protein ligase that mediates the polyubiquitination of lysine and cysteine residues on target proteins. May participate in the final step of endoplasmic reticulum-associated degradation (ERAD). Required for proper lipid homeostasis. In Danio rerio (Zebrafish), this protein is E3 ubiquitin-protein ligase AMFR.